Reading from the N-terminus, the 1044-residue chain is R3H domain-containing protein 2 (1044 aa).

2 disordered regions span residues 23–71 (EESV…AKSN) and 106–147 (SCPS…QEYT). The span at 36-56 (PSKEDVEKEGEENGLRQETQR) shows a compositional bias: basic and acidic residues. Phosphoserine is present on Ser37. Positions 58–71 (TSSHGHARKRAKSN) are enriched in basic residues. A compositionally biased stretch (basic and acidic residues) spans 109–143 (SDKEEEKSTKDVSEKEDKDKSKEKVPRKMLSRDSS). Residue Ser143 is modified to Phosphoserine. Positions 169–232 (RMMLLKLEQE…AVIINKTSST (64 aa)) constitute an R3H domain. The 71-residue stretch at 233-303 (RIPEQRFSEH…VRERIFARET (71 aa)) folds into the SUZ domain. Composition is skewed to basic and acidic residues over residues 261–270 (DASMDRDDNQ) and 277–288 (DGRRSKSIEERE). Disordered regions lie at residues 261 to 288 (DASM…EERE), 320 to 408 (SSSS…LSRP), 433 to 485 (CTAQ…FSPS), 502 to 533 (MAED…LFQP), 551 to 600 (GQPL…SNQQ), 729 to 770 (GTSP…SPSG), and 807 to 848 (GQKP…SLSN). The segment covering 338 to 349 (SRTSSSRQSSTD) has biased composition (low complexity). Phosphoserine occurs at positions 362, 365, and 381. The span at 433–449 (CTAQQQQQQQQQQQQLP) shows a compositional bias: low complexity. Composition is skewed to polar residues over residues 509–521 (PFGQ…QGST) and 554–572 (LPTS…QQVL). The span at 757-770 (PQMSQQYSGVSPSG) shows a compositional bias: low complexity. The span at 818–848 (GSPQANAQMGSSPVTSPTQSPAPSPVTSLSN) shows a compositional bias: polar residues. Ser921 and Ser923 each carry phosphoserine. Phosphothreonine is present on residues Thr924 and Thr928.

It localises to the nucleus. In Mus musculus (Mouse), this protein is R3H domain-containing protein 2 (R3hdm2).